A 554-amino-acid chain; its full sequence is Valerianol synthase TPS1C (554 aa).

Residues Asp307 and Asp311 each coordinate Mg(2+). Positions 326-330 (VQRWD) match the DDXXD motif motif. Asp452, Ser456, and Glu460 together coordinate Mg(2+).

It belongs to the terpene synthase family. Mg(2+) serves as cofactor.

The catalysed reaction is (2E,6E)-farnesyl diphosphate + H2O = valerianol + diphosphate. It functions in the pathway secondary metabolite biosynthesis; terpenoid biosynthesis. Terpene synthase that catalyzes the biosynthesis of the terpene valerianol, which is a volatile compound of floral scent. The protein is Valerianol synthase TPS1C of Camellia hiemalis (Camellia).